A 709-amino-acid chain; its full sequence is Dual specificity calcium/calmodulin-dependent 3',5'-cyclic nucleotide phosphodiesterase 1C (709 aa).

N-acetylmethionine is present on Met1. The interval 123–146 (EKPRFKSIVHAVQAGIFVERMYRR) is calmodulin-binding. Residues 151–528 (VGLSYPPAVI…ERWRAKVPKE (378 aa)) enclose the PDEase domain. Residue His228 is the Proton donor of the active site. Zn(2+) contacts are provided by His232, His268, Asp269, and Asp376. Asp269 contributes to the Mg(2+) binding site. 2 disordered regions span residues 453–495 (LIDE…APIN) and 523–650 (AKVP…TCRL). Over residues 483 to 495 (VKTSGSEGSAPIN) the composition is skewed to polar residues. The segment covering 523-556 (AKVPKEEKAKKEAEEKARLAAEEQQKEMEAKSQA) has biased composition (basic and acidic residues). Positions 571–581 (ETKNQVNGTRA) are enriched in polar residues. Composition is skewed to basic and acidic residues over residues 582–598 (NKSDNPRGKNSKAEKSS) and 606–633 (DFKDGKNKTDKKDHSNIGNDSKKTDGTK).

Belongs to the cyclic nucleotide phosphodiesterase family. PDE1 subfamily. In terms of assembly, homodimer. It depends on Zn(2+) as a cofactor. Mg(2+) serves as cofactor. Isoform PDE1C2 is present in the heart and brain and, at lower levels in the lung, liver, kidney and skeletal muscle. Isoform PDE1C1 is expressed in the heart and brain and, at lower levels in lung. Also expressed at low levels in uterus and testis.

Its subcellular location is the lysosome. It carries out the reaction a nucleoside 3',5'-cyclic phosphate + H2O = a nucleoside 5'-phosphate + H(+). It catalyses the reaction 3',5'-cyclic GMP + H2O = GMP + H(+). The catalysed reaction is 3',5'-cyclic AMP + H2O = AMP + H(+). With respect to regulation, type I PDE are activated by the binding of calmodulin in the presence of Ca(2+). Calmodulin-dependent cyclic nucleotide phosphodiesterase with a dual specificity for the second messengers cAMP and cGMP, which are key regulators of many important physiological processes. Has a high affinity for both cAMP and cGMP. Modulates the amplitude and duration of the cAMP signal in sensory cilia in response to odorant stimulation, hence contributing to the generation of action potentials. Regulates smooth muscle cell proliferation. Regulates the stability of growth factor receptors, including PDGFRB. In Homo sapiens (Human), this protein is Dual specificity calcium/calmodulin-dependent 3',5'-cyclic nucleotide phosphodiesterase 1C.